Here is a 475-residue protein sequence, read N- to C-terminus: UDP-N-acetylmuramate--L-alanine ligase (475 aa).

G125–T131 is an ATP binding site.

The protein belongs to the MurCDEF family.

It localises to the cytoplasm. The catalysed reaction is UDP-N-acetyl-alpha-D-muramate + L-alanine + ATP = UDP-N-acetyl-alpha-D-muramoyl-L-alanine + ADP + phosphate + H(+). The protein operates within cell wall biogenesis; peptidoglycan biosynthesis. Cell wall formation. This Actinobacillus pleuropneumoniae serotype 7 (strain AP76) protein is UDP-N-acetylmuramate--L-alanine ligase.